Reading from the N-terminus, the 532-residue chain is BTB/POZ domain-containing protein 3 (532 aa).

Residues 23–54 (KNRSKKSSKKTNTGGGGGGSSSSSSSSSNSKL) form a disordered region. Residues 43–53 (SSSSSSSSNSK) show a composition bias toward low complexity. The 71-residue stretch at 130 to 200 (ADVHFVVGPP…IYCDEIDLAA (71 aa)) folds into the BTB domain. Positions 245–310 (FEEPDLTQRC…NWAEVECQRQ (66 aa)) constitute a BACK domain.

As to expression, expressed in visual cortex. Expressed in visual cortex layer IV neurons.

The protein localises to the cytoplasm. It is found in the cytosol. Its subcellular location is the nucleus. Functionally, acts as a key regulator of dendritic field orientation during development of sensory cortex. Also directs dendrites toward active axon terminals when ectopically expressed. This is BTB/POZ domain-containing protein 3 (BTBD3) from Mustela putorius furo (European domestic ferret).